A 374-amino-acid chain; its full sequence is UDP-N-acetylglucosamine--N-acetylmuramyl-(pentapeptide) pyrophosphoryl-undecaprenol N-acetylglucosamine transferase (374 aa).

Residues 10-12, Asn-124, Arg-166, Ser-196, and Gln-294 each bind UDP-N-acetyl-alpha-D-glucosamine; that span reads TGG.

It belongs to the glycosyltransferase 28 family. MurG subfamily.

Its subcellular location is the cell membrane. The catalysed reaction is di-trans,octa-cis-undecaprenyl diphospho-N-acetyl-alpha-D-muramoyl-L-alanyl-D-glutamyl-meso-2,6-diaminopimeloyl-D-alanyl-D-alanine + UDP-N-acetyl-alpha-D-glucosamine = di-trans,octa-cis-undecaprenyl diphospho-[N-acetyl-alpha-D-glucosaminyl-(1-&gt;4)]-N-acetyl-alpha-D-muramoyl-L-alanyl-D-glutamyl-meso-2,6-diaminopimeloyl-D-alanyl-D-alanine + UDP + H(+). It functions in the pathway cell wall biogenesis; peptidoglycan biosynthesis. Cell wall formation. Catalyzes the transfer of a GlcNAc subunit on undecaprenyl-pyrophosphoryl-MurNAc-pentapeptide (lipid intermediate I) to form undecaprenyl-pyrophosphoryl-MurNAc-(pentapeptide)GlcNAc (lipid intermediate II). In Symbiobacterium thermophilum (strain DSM 24528 / JCM 14929 / IAM 14863 / T), this protein is UDP-N-acetylglucosamine--N-acetylmuramyl-(pentapeptide) pyrophosphoryl-undecaprenol N-acetylglucosamine transferase.